We begin with the raw amino-acid sequence, 2850 residues long: Mucin-6 (2850 aa).

The N-terminal stretch at 1 to 22 (MLRVRQLLLLLLFRGPLIDAGA) is a signal peptide. Residues 43-256 (GWCSTWGAGH…KLDDPNEICA (214 aa)) form the VWFD 1 domain. Disulfide bonds link Cys-45–Cys-218 and Cys-67–Cys-255. An N-linked (GlcNAc...) asparagine glycan is attached at Asn-94. Residues 160-183 (HLTEGQGGDEVGTPGTLKQESKGS) are disordered. Asn-310 carries an N-linked (GlcNAc...) asparagine glycan. The region spanning 344 to 399 (CPANQVYQECGEVCIKTCSNPQHSCSSPCTFGCFCPHGTLLDDISGNQSCVPVNQC) is the TIL 1 domain. One can recognise a VWFD 2 domain in the interval 437–621 (GHCSLEGGSF…ALEREMDPCS (185 aa)). Cystine bridges form between Cys-439–Cys-575 and Cys-461–Cys-620. N-linked (GlcNAc...) asparagine glycans are attached at residues Asn-528 and Asn-701. The 64-residue stretch at 806 to 869 (CPEPKTFQSC…DGQCVPAEEC (64 aa)) folds into the TIL 2 domain. The VWFD 3 domain occupies 908–1080 (STCVLYGEGH…NSWKESPLCG (173 aa)). 4 cysteine pairs are disulfide-bonded: Cys-910-Cys-1044, Cys-932-Cys-1079, Cys-941-Cys-1041, and Cys-959-Cys-966. Asn-1017 and Asn-1221 each carry an N-linked (GlcNAc...) asparagine glycan. Positions 1263–1281 (EFHSSTSANTPVAPSYLPG) are enriched in low complexity. 16 disordered regions span residues 1263 to 1363 (EFHS…TAEL), 1377 to 1400 (GMST…THRV), 1466 to 1504 (VSAN…PSTT), 1580 to 1600 (TPPV…RTTH), 1626 to 1650 (IASP…TSSV), 1705 to 1813 (TKTS…SLST), 1877 to 1942 (QTKS…RTTH), 1968 to 1992 (IASP…TSSV), 2049 to 2119 (TSFS…PSTT), 2219 to 2254 (QTKS…TTNS), 2276 to 2295 (IAHT…SSTT), 2306 to 2338 (EQST…SPTD), 2370 to 2473 (TTPP…FRTP), 2511 to 2621 (PTNP…TFVS), 2634 to 2674 (PTIH…KSTT), and 2692 to 2761 (STMG…GTCS). Positions 1294–1312 (EELTVWTTPKESTVSSGEY) are enriched in polar residues. Low complexity predominate over residues 1345 to 1363 (TSKPTASSLSSSTKTTAEL). Polar residues-rich tracts occupy residues 1378-1399 (MSTS…TTHR) and 1466-1484 (VSAN…PVVH). Tandem repeats lie at residues 1440–1555 (TQNL…PTTE), 1556–1712 (GLNT…FSTD), 1713–1885 (RTST…FSTD), 1886–2054 (RTSA…FSTD), 2055–2227 (RTST…FSTD), 2228–2396 (RTST…FSTE), 2397–2563 (RTST…FPTT), and 2564–2671 (RTST…FSSK). The tract at residues 1440 to 2671 (TQNLFSTAPH…VPTFSSFSSK (1232 aa)) is approximate repeats. Residues 1485–1504 (TTSGTSSSPQTPRTTHPSTT) are compositionally biased toward low complexity. A compositionally biased stretch (polar residues) spans 1626–1639 (IASPTPSAPQTSLA). The segment covering 1705–1719 (TKTSFSTDRTSTSTS) has biased composition (low complexity). Polar residues predominate over residues 1720–1757 (APHLSETSAVTAHQSTPTAVSANSIKPTMSSTGTPVVH). A compositionally biased stretch (low complexity) spans 1758 to 1777 (TTSGTTSSPQTPRTTHPSTT). A compositionally biased stretch (polar residues) spans 1778–1813 (VAVSGTVHTTGLPSGTSVHTTTNFPTHSGPQSSLST). Low complexity predominate over residues 1893 to 1942 (SQPSTVTPTQSTPIPATTNSLMTTGGLTGTPPVHTTSGTTSSPQTPRTTH). Residues 1968-1981 (IASPTPSAPQTSLA) show a composition bias toward polar residues. Low complexity predominate over residues 2049 to 2061 (TSFSTDRTSTSTS). Residues 2062–2099 (APHLSETSAVTAHQSTPTAVSANSIKPTMSSTGTPVVH) show a composition bias toward polar residues. Residues 2100 to 2119 (TTSGTTSSPQTPRTTHPSTT) show a composition bias toward low complexity. Positions 2227–2238 (DRTSTPHLSQSS) are enriched in polar residues. Residues 2282–2295 (TTHSLPTAASSSTT) show a composition bias toward low complexity. Positions 2370 to 2384 (TTPPNTSTPVTHSTS) are enriched in low complexity. The span at 2385–2429 (ATTEAQGSFSTERTSTSYLSHPSSTTVHQSTAGPVITSIKSTMGV) shows a compositional bias: polar residues. The segment covering 2436-2456 (HTTSGTTSSPQTPHSTHPIST) has biased composition (low complexity). The span at 2457 to 2466 (AAISRTTGIS) shows a compositional bias: polar residues. Over residues 2516–2533 (SVSSASTSRPLSTSLPTT) the composition is skewed to low complexity. Polar residues predominate over residues 2534–2560 (IKGTGTPQTPVSDINTTSATTQAHSSF). Low complexity predominate over residues 2561-2584 (PTTRTSTSHLSLPSSMTSTLTPAS). Residues 2585–2601 (RSASTLQYTPTPSSVSH) are compositionally biased toward polar residues. Residues 2639–2674 (TPTPSSRPTSSTGLLSTSKTTSHVPTFSSFSSKSTT) are compositionally biased toward low complexity. Positions 2692-2725 (STMGMTNLPSSGSPDINHTTRPPGSSPLPTSAFL) are enriched in polar residues. The segment covering 2726–2759 (SRSTSPTGSSSPSTPVSSSNPDSSVSSPPSHPGT) has biased composition (low complexity). Cystine bridges form between Cys-2760–Cys-2807, Cys-2774–Cys-2821, Cys-2783–Cys-2841, and Cys-2787–Cys-2843. The 90-residue stretch at 2760 to 2849 (CSLQEEEHQI…SCVCSPLQCK (90 aa)) folds into the CTCK domain.

As to quaternary structure, multimer; disulfide-linked. Post-translationally, O-glycosylated. As to expression, expressed in stomach, duodenum and small intestine.

It is found in the secreted. Its function is as follows. May provide a mechanism for modulation of the composition of the protective mucus layer related to acid secretion or the presence of bacteria and noxious agents in the lumen. Plays an important role in the cytoprotection of epithelial surfaces and are used as tumor markers in a variety of cancers. May play a role in epithelial organogenesis. The protein is Mucin-6 (Muc6) of Mus musculus (Mouse).